Reading from the N-terminus, the 31-residue chain is Fibrinogen beta chain (31 aa).

Residues 1–10 show a composition bias toward acidic residues; that stretch reads HYYDDTDEEE. Residues 1–31 form a disordered region; it reads HYYDDTDEEERIVSTVDARGHRPLDKKREEA. Residue Tyr2 is modified to Sulfotyrosine; partial. Tyr3 is modified (sulfotyrosine). Residues 18 to 31 show a composition bias toward basic and acidic residues; sequence ARGHRPLDKKREEA.

In terms of assembly, heterohexamer; disulfide linked. Contains 2 sets of 3 non-identical chains (alpha, beta and gamma). The 2 heterotrimers are in head to head conformation with the N-termini in a small central domain. In terms of processing, conversion of fibrinogen to fibrin is triggered by thrombin, which cleaves fibrinopeptides A and B from alpha and beta chains, and thus exposes the N-terminal polymerization sites responsible for the formation of the soft clot.

It is found in the secreted. Functionally, cleaved by the protease thrombin to yield monomers which, together with fibrinogen alpha (FGA) and fibrinogen gamma (FGG), polymerize to form an insoluble fibrin matrix. Fibrin has a major function in hemostasis as one of the primary components of blood clots. In addition, functions during the early stages of wound repair to stabilize the lesion and guide cell migration during re-epithelialization. Was originally thought to be essential for platelet aggregation, based on in vitro studies using anticoagulated blood. However subsequent studies have shown that it is not absolutely required for thrombus formation in vivo. Enhances expression of SELP in activated platelets. Maternal fibrinogen is essential for successful pregnancy. Fibrin deposition is also associated with infection, where it protects against IFNG-mediated hemorrhage. May also facilitate the antibacterial immune response via both innate and T-cell mediated pathways. In Canis lupus familiaris (Dog), this protein is Fibrinogen beta chain (FGB).